The sequence spans 74 residues: Small ribosomal subunit protein eS17 (74 aa).

This sequence belongs to the eukaryotic ribosomal protein eS17 family.

The polypeptide is Small ribosomal subunit protein eS17 (Ignicoccus hospitalis (strain KIN4/I / DSM 18386 / JCM 14125)).